Reading from the N-terminus, the 170-residue chain is Cyclic pyranopterin monophosphate synthase 1 (170 aa).

Substrate-binding positions include Leu-79–His-81 and Met-116–Glu-117. Asp-131 is an active-site residue.

It belongs to the MoaC family. Homohexamer; trimer of dimers.

The catalysed reaction is (8S)-3',8-cyclo-7,8-dihydroguanosine 5'-triphosphate = cyclic pyranopterin phosphate + diphosphate. It functions in the pathway cofactor biosynthesis; molybdopterin biosynthesis. Its function is as follows. Catalyzes the conversion of (8S)-3',8-cyclo-7,8-dihydroguanosine 5'-triphosphate to cyclic pyranopterin monophosphate (cPMP). In Mycobacterium bovis (strain ATCC BAA-935 / AF2122/97), this protein is Cyclic pyranopterin monophosphate synthase 1 (moaC1).